The sequence spans 73 residues: UPF0346 protein LVIS_0790 (73 aa).

The protein belongs to the UPF0346 family.

The protein is UPF0346 protein LVIS_0790 of Levilactobacillus brevis (strain ATCC 367 / BCRC 12310 / CIP 105137 / JCM 1170 / LMG 11437 / NCIMB 947 / NCTC 947) (Lactobacillus brevis).